A 288-amino-acid polypeptide reads, in one-letter code: Pyrroline-5-carboxylate reductase 3 (288 aa).

It belongs to the pyrroline-5-carboxylate reductase family. Homodecamer; composed of 5 homodimers.

It localises to the cytoplasm. The enzyme catalyses L-proline + NADP(+) = (S)-1-pyrroline-5-carboxylate + NADPH + 2 H(+). It carries out the reaction L-proline + NAD(+) = (S)-1-pyrroline-5-carboxylate + NADH + 2 H(+). Its pathway is amino-acid biosynthesis; L-proline biosynthesis; L-proline from L-glutamate 5-semialdehyde: step 1/1. Oxidoreductase that catalyzes the last step in proline biosynthesis, which corresponds to the reduction of pyrroline-5-carboxylate (P5C) to L-proline using NAD(P)H. Proline is synthesized from either glutamate or ornithine; both are converted to P5C, and then to proline via pyrroline-5-carboxylate reductases (PYCRs). PYCR3 is exclusively linked to the biosynthesis of proline from ornithine. The polypeptide is Pyrroline-5-carboxylate reductase 3 (Danio rerio (Zebrafish)).